The primary structure comprises 282 residues: Pantothenate synthetase (282 aa).

30-37 (MGYLHEGH) contributes to the ATP binding site. Histidine 37 serves as the catalytic Proton donor. Glutamine 61 is a binding site for (R)-pantoate. Glutamine 61 lines the beta-alanine pocket. 147–150 (GMKD) is a binding site for ATP. Residue glutamine 153 participates in (R)-pantoate binding. ATP is bound by residues valine 176 and 184–187 (KSSR).

It belongs to the pantothenate synthetase family. Homodimer.

The protein localises to the cytoplasm. It carries out the reaction (R)-pantoate + beta-alanine + ATP = (R)-pantothenate + AMP + diphosphate + H(+). It functions in the pathway cofactor biosynthesis; (R)-pantothenate biosynthesis; (R)-pantothenate from (R)-pantoate and beta-alanine: step 1/1. Catalyzes the condensation of pantoate with beta-alanine in an ATP-dependent reaction via a pantoyl-adenylate intermediate. The protein is Pantothenate synthetase of Bacillus thuringiensis subsp. konkukian (strain 97-27).